Here is a 207-residue protein sequence, read N- to C-terminus: Tereporin-Ts1 (207 aa).

The N-terminal stretch at 1 to 11 is a signal peptide; the sequence is VIFALVLGNAS. The interval 35–54 is N-terminal region; it reads SAGTSLASTILSGLAASGYR. The phosphocholine site is built by Gly-111, Ser-129, Pro-131, Tyr-164, and Tyr-165.

Belongs to the actinoporin family. Conoidea subfamily. As to quaternary structure, octamer or nonamer in membranes. Monomer in the soluble state. In terms of tissue distribution, expressed by the venom duct.

Its subcellular location is the secreted. It localises to the nematocyst. It is found in the target cell membrane. Its function is as follows. Pore-forming protein that forms pores of around 1 nm and causes cardiac stimulation and cytolysis. This is Tereporin-Ts1 from Terebra subulata (Chocolate spotted auger).